The primary structure comprises 165 residues: Peptide methionine sulfoxide reductase MsrA (165 aa).

C11 is a catalytic residue.

It belongs to the MsrA Met sulfoxide reductase family.

It catalyses the reaction L-methionyl-[protein] + [thioredoxin]-disulfide + H2O = L-methionyl-(S)-S-oxide-[protein] + [thioredoxin]-dithiol. The enzyme catalyses [thioredoxin]-disulfide + L-methionine + H2O = L-methionine (S)-S-oxide + [thioredoxin]-dithiol. Has an important function as a repair enzyme for proteins that have been inactivated by oxidation. Catalyzes the reversible oxidation-reduction of methionine sulfoxide in proteins to methionine. This Ureaplasma urealyticum serovar 10 (strain ATCC 33699 / Western) protein is Peptide methionine sulfoxide reductase MsrA.